The chain runs to 1573 residues: Mediator of RNA polymerase II transcription subunit 1 (1573 aa).

The LXXLL motif 1 signature appears at 588–592 (LTSLL). Disordered stretches follow at residues 595-691 (TSNS…EDDF), 774-883 (SKLP…FKDF), and 928-1564 (LGGP…GDDD). Pro residues predominate over residues 606–617 (PTPPQHTPPPAS). The LXXLL motif 2 motif lies at 629–633 (LMNLL). The segment covering 651–668 (ERQNSSGSPRTELGSSAS) has biased composition (polar residues). The span at 678–691 (TGTEKMKNQTEDDF) shows a compositional bias: basic and acidic residues. Polar residues-rich tracts occupy residues 791–804 (RDSS…STLF), 835–864 (GSPN…QSGF), and 934–944 (QETQSRSQSPL). Residues 949-961 (LGKDRPQKQKVKE) show a composition bias toward basic and acidic residues. Positions 963-973 (GNGGGAGGGLS) are enriched in gly residues. 5 stretches are compositionally biased toward low complexity: residues 1025-1038 (PTST…GTSG), 1053-1085 (KITI…SSSS), 1092-1116 (SSLS…MKIG), 1124-1143 (SGQS…SMGK), and 1155-1164 (SSNVNNSSGS). Residues 1176–1193 (MNPSLSKPNISPSHSRPS) show a composition bias toward polar residues. Positions 1226–1277 (LSGSGSNSTTKSSSGLVSSGSLTQKPNSSSSSSSSSSSSSSSSSSSSSSFSS) are enriched in low complexity. Residues 1278–1290 (GVSQNLHSSSKGK) show a composition bias toward polar residues. The segment covering 1350 to 1362 (PTKREKGEKDKSK) has biased composition (basic and acidic residues). Polar residues-rich tracts occupy residues 1420-1435 (SQMQ…SGST) and 1443-1457 (PSHN…QALD). A compositionally biased stretch (low complexity) spans 1461–1471 (ESGSSSIAEKS). A compositionally biased stretch (basic residues) spans 1496-1505 (KHKKHKKEKK). The segment covering 1506-1518 (RLKDKDRDREKKK) has biased composition (basic and acidic residues).

The protein belongs to the Mediator complex subunit 1 family. As to quaternary structure, component of the Mediator complex.

The protein resides in the nucleus. Its function is as follows. Component of the Mediator complex, a coactivator involved in the regulated transcription of nearly all RNA polymerase II-dependent genes. Mediator functions as a bridge to convey information from gene-specific regulatory proteins to the basal RNA polymerase II transcription machinery. Mediator is recruited to promoters by direct interactions with regulatory proteins and serves as a scaffold for the assembly of a functional preinitiation complex with RNA polymerase II and the general transcription factors. The chain is Mediator of RNA polymerase II transcription subunit 1 (med1) from Xenopus tropicalis (Western clawed frog).